The sequence spans 340 residues: DnaJ homolog subfamily B member 1 (340 aa).

Residues Gly-2–Glu-70 enclose the J domain. Positions Gly-68–Phe-90 are disordered. The span at Lys-73–Asn-86 shows a compositional bias: gly residues. At Thr-307 the chain carries Phosphothreonine.

As to quaternary structure, interacts with DNAJC3. Interacts with HSF1 (via transactivation domain); this interaction results in the inhibition of heat shock- and HSF1-induced transcriptional activity during the attenuation and recovery phase period of the heat shock response. Interacts with BAG3.

Its subcellular location is the cytoplasm. It localises to the nucleus. It is found in the nucleolus. Interacts with HSP70 and can stimulate its ATPase activity. Stimulates the association between HSC70 and HIP. Negatively regulates heat shock-induced HSF1 transcriptional activity during the attenuation and recovery phase period of the heat shock response. Stimulates ATP hydrolysis and the folding of unfolded proteins mediated by HSPA1A/B (in vitro). This is DnaJ homolog subfamily B member 1 (DNAJB1) from Bos taurus (Bovine).